Here is a 101-residue protein sequence, read N- to C-terminus: Phosphoribosyl-AMP cyclohydrolase (101 aa).

Mg(2+) is bound at residue Asp-71. Cys-72 lines the Zn(2+) pocket. The Mg(2+) site is built by Asp-73 and Asp-75. Cys-88 and Cys-95 together coordinate Zn(2+).

The protein belongs to the PRA-CH family. Homodimer. The cofactor is Mg(2+). It depends on Zn(2+) as a cofactor.

It localises to the cytoplasm. It catalyses the reaction 1-(5-phospho-beta-D-ribosyl)-5'-AMP + H2O = 1-(5-phospho-beta-D-ribosyl)-5-[(5-phospho-beta-D-ribosylamino)methylideneamino]imidazole-4-carboxamide. It functions in the pathway amino-acid biosynthesis; L-histidine biosynthesis; L-histidine from 5-phospho-alpha-D-ribose 1-diphosphate: step 3/9. Functionally, catalyzes the hydrolysis of the adenine ring of phosphoribosyl-AMP. The protein is Phosphoribosyl-AMP cyclohydrolase of Bacillus cereus (strain G9842).